The primary structure comprises 471 residues: UDP-N-acetylmuramoylalanine--D-glutamate ligase (471 aa).

Gly120–Thr126 contacts ATP.

It belongs to the MurCDEF family.

The protein localises to the cytoplasm. The catalysed reaction is UDP-N-acetyl-alpha-D-muramoyl-L-alanine + D-glutamate + ATP = UDP-N-acetyl-alpha-D-muramoyl-L-alanyl-D-glutamate + ADP + phosphate + H(+). Its pathway is cell wall biogenesis; peptidoglycan biosynthesis. Cell wall formation. Catalyzes the addition of glutamate to the nucleotide precursor UDP-N-acetylmuramoyl-L-alanine (UMA). This is UDP-N-acetylmuramoylalanine--D-glutamate ligase from Nitrosomonas europaea (strain ATCC 19718 / CIP 103999 / KCTC 2705 / NBRC 14298).